The following is a 357-amino-acid chain: S-adenosylmethionine:tRNA ribosyltransferase-isomerase (357 aa).

It belongs to the QueA family. In terms of assembly, monomer.

It is found in the cytoplasm. The enzyme catalyses 7-aminomethyl-7-carbaguanosine(34) in tRNA + S-adenosyl-L-methionine = epoxyqueuosine(34) in tRNA + adenine + L-methionine + 2 H(+). The protein operates within tRNA modification; tRNA-queuosine biosynthesis. Its function is as follows. Transfers and isomerizes the ribose moiety from AdoMet to the 7-aminomethyl group of 7-deazaguanine (preQ1-tRNA) to give epoxyqueuosine (oQ-tRNA). The protein is S-adenosylmethionine:tRNA ribosyltransferase-isomerase of Buchnera aphidicola subsp. Acyrthosiphon pisum (strain Tuc7).